Reading from the N-terminus, the 905-residue chain is DNA mismatch repair protein MutS (905 aa).

The interval 1–95 (MELSLQGSLF…PAWGHHSQLK (95 aa)) is disordered. Positions 38–50 (NLSDADLSKDALA) are enriched in basic and acidic residues. An ATP-binding site is contributed by 721-728 (GPNASGKS).

It belongs to the DNA mismatch repair MutS family.

Functionally, this protein is involved in the repair of mismatches in DNA. It is possible that it carries out the mismatch recognition step. This protein has a weak ATPase activity. The sequence is that of DNA mismatch repair protein MutS from Synechococcus sp. (strain CC9902).